We begin with the raw amino-acid sequence, 346 residues long: Phosphate acyltransferase (346 aa).

This sequence belongs to the PlsX family. Homodimer. Probably interacts with PlsY.

It is found in the cytoplasm. It carries out the reaction a fatty acyl-[ACP] + phosphate = an acyl phosphate + holo-[ACP]. It functions in the pathway lipid metabolism; phospholipid metabolism. Its function is as follows. Catalyzes the reversible formation of acyl-phosphate (acyl-PO(4)) from acyl-[acyl-carrier-protein] (acyl-ACP). This enzyme utilizes acyl-ACP as fatty acyl donor, but not acyl-CoA. The chain is Phosphate acyltransferase from Brucella ovis (strain ATCC 25840 / 63/290 / NCTC 10512).